We begin with the raw amino-acid sequence, 504 residues long: ATP synthase subunit beta (504 aa).

Gly-181–Thr-188 contacts ATP.

The protein belongs to the ATPase alpha/beta chains family. In terms of assembly, F-type ATPases have 2 components, CF(1) - the catalytic core - and CF(0) - the membrane proton channel. CF(1) has five subunits: alpha(3), beta(3), gamma(1), delta(1), epsilon(1). CF(0) has three main subunits: a(1), b(2) and c(9-12). The alpha and beta chains form an alternating ring which encloses part of the gamma chain. CF(1) is attached to CF(0) by a central stalk formed by the gamma and epsilon chains, while a peripheral stalk is formed by the delta and b chains.

The protein localises to the cell inner membrane. The catalysed reaction is ATP + H2O + 4 H(+)(in) = ADP + phosphate + 5 H(+)(out). Produces ATP from ADP in the presence of a proton gradient across the membrane. The catalytic sites are hosted primarily by the beta subunits. In Ehrlichia ruminantium (strain Gardel), this protein is ATP synthase subunit beta.